We begin with the raw amino-acid sequence, 490 residues long: Ribosomal L1 domain-containing protein 1 (490 aa).

Position 1 is an N-acetylmethionine (M1). A compositionally biased stretch (low complexity) spans 1 to 27 (MEDSASASLSSAAATGTSTSTPAAPTA). The tract at residues 1-33 (MEDSASASLSSAAATGTSTSTPAAPTARKQLDK) is disordered. Glycyl lysine isopeptide (Lys-Gly) (interchain with G-Cter in SUMO2) cross-links involve residues K120 and K254. Basic residues predominate over residues 280–293 (LNKKKKEARRKRRE). Residues 280 to 313 (LNKKKKEARRKRRERNFEKQKERKKKRQQARKTA) are a coiled coil. Residues 280 to 490 (LNKKKKEARR…PKKPKVPQST (211 aa)) form a disordered region. Residues 329-343 (TVKKPESKKEQTPEH) are compositionally biased toward basic and acidic residues. T340 bears the Phosphothreonine mark. Basic residues predominate over residues 344 to 353 (GKKKRGRGKA). Residue T358 is modified to Phosphothreonine. At S361 the chain carries Phosphoserine. T375 carries the phosphothreonine modification. Basic and acidic residues predominate over residues 376-385 (PANEKVEIQK). K380 is covalently cross-linked (Glycyl lysine isopeptide (Lys-Gly) (interchain with G-Cter in SUMO2)). A phosphoserine mark is found at S392 and S396. Phosphothreonine is present on residues T415 and T423. Position 427 is a phosphoserine (S427). A compositionally biased stretch (basic and acidic residues) spans 427–460 (SPEKKPKIKEEAVKEKSPSLGKKDARQTPKKPEA). Residue K435 forms a Glycyl lysine isopeptide (Lys-Gly) (interchain with G-Cter in SUMO2) linkage. S443 is modified (phosphoserine). Residue K461 forms a Glycyl lysine isopeptide (Lys-Gly) (interchain with G-Cter in SUMO2) linkage. The residue at position 465 (T465) is a Phosphothreonine. K468 is subject to N6-acetyllysine. Position 469 is a phosphoserine (S469). Basic residues predominate over residues 469–490 (SVRKASHTPKKWPKKPKVPQST).

It belongs to the universal ribosomal protein uL1 family. Highly divergent. In terms of assembly, interacts with ING1 (isoform 2). Interacts with KPNA7 and KPNA2. As to expression, expressed at high intensities in the heart, skeletal muscle, and placenta.

The protein localises to the nucleus. The protein resides in the nucleolus. Regulates cellular senescence through inhibition of PTEN translation. Acts as a pro-apoptotic regulator in response to DNA damage. The sequence is that of Ribosomal L1 domain-containing protein 1 (RSL1D1) from Homo sapiens (Human).